A 216-amino-acid chain; its full sequence is ATP-dependent Clp protease proteolytic subunit (216 aa).

Ser-101 (nucleophile) is an active-site residue. His-126 is an active-site residue.

Belongs to the peptidase S14 family. Component of the chloroplastic Clp protease core complex.

Its subcellular location is the plastid. It localises to the chloroplast stroma. It carries out the reaction Hydrolysis of proteins to small peptides in the presence of ATP and magnesium. alpha-casein is the usual test substrate. In the absence of ATP, only oligopeptides shorter than five residues are hydrolyzed (such as succinyl-Leu-Tyr-|-NHMec, and Leu-Tyr-Leu-|-Tyr-Trp, in which cleavage of the -Tyr-|-Leu- and -Tyr-|-Trp bonds also occurs).. In terms of biological role, cleaves peptides in various proteins in a process that requires ATP hydrolysis. Has a chymotrypsin-like activity. Plays a major role in the degradation of misfolded proteins. The protein is ATP-dependent Clp protease proteolytic subunit of Zea mays (Maize).